Reading from the N-terminus, the 281-residue chain is Proteasome subunit beta (281 aa).

A propeptide spans 1 to 53 (MEANTRSTGRLPAAFLTPGSSSFMDFLSDHQPELLPGKRQLPPTQGVIEAPHG) (removed in mature form; by autocatalysis). The active-site Nucleophile is Thr54.

Belongs to the peptidase T1B family. As to quaternary structure, the 20S proteasome core is composed of 14 alpha and 14 beta subunits that assemble into four stacked heptameric rings, resulting in a barrel-shaped structure. The two inner rings, each composed of seven catalytic beta subunits, are sandwiched by two outer rings, each composed of seven alpha subunits. The catalytic chamber with the active sites is on the inside of the barrel. Has a gated structure, the ends of the cylinder being occluded by the N-termini of the alpha-subunits. Is capped by the proteasome-associated ATPase, ARC.

The protein localises to the cytoplasm. The enzyme catalyses Cleavage of peptide bonds with very broad specificity.. The protein operates within protein degradation; proteasomal Pup-dependent pathway. With respect to regulation, the formation of the proteasomal ATPase ARC-20S proteasome complex, likely via the docking of the C-termini of ARC into the intersubunit pockets in the alpha-rings, may trigger opening of the gate for substrate entry. Interconversion between the open-gate and close-gate conformations leads to a dynamic regulation of the 20S proteasome proteolysis activity. Its function is as follows. Component of the proteasome core, a large protease complex with broad specificity involved in protein degradation. The polypeptide is Proteasome subunit beta (Streptomyces scabiei (strain 87.22)).